The sequence spans 260 residues: UPF0246 protein BTH_I1090 (260 aa).

Belongs to the UPF0246 family.

This is UPF0246 protein BTH_I1090 from Burkholderia thailandensis (strain ATCC 700388 / DSM 13276 / CCUG 48851 / CIP 106301 / E264).